Here is a 95-residue protein sequence, read N- to C-terminus: Small ribosomal subunit protein bS6 (95 aa).

It belongs to the bacterial ribosomal protein bS6 family.

Its function is as follows. Binds together with bS18 to 16S ribosomal RNA. The chain is Small ribosomal subunit protein bS6 from Geobacillus kaustophilus (strain HTA426).